The sequence spans 27 residues: GIGSAILSAGKSALKGLAKGLAEHFAN.

Asparagine 27 is modified (asparagine amide).

Belongs to the bombinin family. In terms of tissue distribution, expressed by the skin glands.

The protein localises to the secreted. In terms of biological role, has antimicrobial activity, but no hemolytic activity. Preference on killing Gram-negative non-enteric bacteria. This Bombina orientalis (Oriental fire-bellied toad) protein is Bombinin-like peptide 2.